Consider the following 412-residue polypeptide: Putative potassium channel protein RPA4233 (412 aa).

The next 5 membrane-spanning stretches (helical) occupy residues 35–55 (FIVFFIVLSVGITVMESVPAM), 65–85 (ALELLCLVMFSIEYYIRIWIA), 164–184 (LMACLVILACATLVSATAMHI), 202–222 (WWAIVTLSTIGYGDVVPATGI), and 225–245 (MVASATIICGLIMIALPVGIV). Positions 210-215 (TIGYGD) match the Selectivity filter motif. 270–388 (LFSHLTAGDI…RKINQIVEGR (119 aa)) contacts a nucleoside 3',5'-cyclic phosphate.

Belongs to the potassium channel family.

The protein resides in the cell membrane. The polypeptide is Putative potassium channel protein RPA4233 (Rhodopseudomonas palustris (strain ATCC BAA-98 / CGA009)).